A 126-amino-acid polypeptide reads, in one-letter code: Holo-[acyl-carrier-protein] synthase (126 aa).

The Mg(2+) site is built by Asp-9 and Glu-58.

This sequence belongs to the P-Pant transferase superfamily. AcpS family. Requires Mg(2+) as cofactor.

It is found in the cytoplasm. It carries out the reaction apo-[ACP] + CoA = holo-[ACP] + adenosine 3',5'-bisphosphate + H(+). Functionally, transfers the 4'-phosphopantetheine moiety from coenzyme A to a Ser of acyl-carrier-protein. The sequence is that of Holo-[acyl-carrier-protein] synthase from Citrobacter koseri (strain ATCC BAA-895 / CDC 4225-83 / SGSC4696).